Consider the following 413-residue polypeptide: Histidine--tRNA ligase (413 aa).

This sequence belongs to the class-II aminoacyl-tRNA synthetase family.

The protein localises to the cytoplasm. The enzyme catalyses tRNA(His) + L-histidine + ATP = L-histidyl-tRNA(His) + AMP + diphosphate + H(+). In Methanosarcina acetivorans (strain ATCC 35395 / DSM 2834 / JCM 12185 / C2A), this protein is Histidine--tRNA ligase.